A 205-amino-acid chain; its full sequence is Retron Vc95 putative HNH endonuclease (205 aa).

Putative HNH endonuclease component of antiviral defense system retron Vc95, composed of a non-coding RNA (ncRNA), a reverse transcriptase (RT), a probable ATP-binding protein and this protein. Expression of retron Vc95 confers protection against bacteriophages T2, T4 and T6. At multiplicity of infection (MOI) of 0.02 cultures slow growth when infected with T4 but do not collapse, at MOI 2 cultures enter growth stasis. This Vibrio cholerae serotype O1 biovar El Tor protein is Retron Vc95 putative HNH endonuclease.